Here is a 496-residue protein sequence, read N- to C-terminus: MKRTLLCCLTLLSCPFLYADEDTQLRLNQSLDQTLLQEQRQFHEQGTIRSTEQLPKLQINGQEYSVEQNPNDLAKALYLAVMQKQWLKATVYLEHYKKYVGYDRALTDFAEGAVARSQGQLKLAEQKFQSSLKQQPHNLICELELARVLFEQQKNKEAARLFISIQDQLKQSDPAVIPSGVLTTVNTIVQALKKRDSWQGSVSAGYTYVSNLNSSSEQSKTWTLYGRDSEGNMIPVREVTRGTPKAESAIGLDYEASLIKRYAIEGHHGVALRALAFGQSYNDHATFNESTININAGYSYFDLKNQIGVSPLFEHKRYGNDGLYNAWGARAEWMHFISADKAFKLEAESKDLNYQKYKTLDGVESSAFATFWKIFPDQWTFFGGLDVLDHSTQEKYMAAYQQQGVRLGLSKSWSTGFNTTLLSSYRWRLFDKYAETFLARRHDFEQNHTFVVQMPRFEFYGMTPNLTYRYNHNKSNVDWLYSYDKHNISFKLEHRF.

Residues 1 to 19 (MKRTLLCCLTLLSCPFLYA) form the signal peptide. The next 14 membrane-spanning stretches (beta stranded) occupy residues 198–208 (WQGSVSAGYTY), 253–263 (DYEASLIKRYA), 268–277 (HGVALRALAF), 291–301 (TININAGYSYF), 305–315 (NQIGVSPLFEH), 327–337 (WGARAEWMHFI), 341–351 (KAFKLEAESKD), 365–374 (SSAFATFWKI), 380–389 (TFFGGLDVLD), 403–413 (QGVRLGLSKSW), 418–427 (NTTLLSSYRW), 446–455 (QNHTFVVQMP), 462–472 (MTPNLTYRYNH), and 486–495 (HNISFKLEHR).

The protein belongs to the Slam family.

The protein resides in the cell outer membrane. In terms of biological role, part of a high affinity heme acquisition system. Mediates the secretion of the hemophilin HphA across the outer membrane into the extracellular environment. Plays a supporting role for full virulence. The chain is Hemophilin secretion modulator from Acinetobacter baumannii.